The following is a 275-amino-acid chain: Dermonecrotic toxin LamSicTox-alphaIV1i (275 aa).

Residue H5 is part of the active site. Mg(2+) is bound by residues E25 and D27. H41 (nucleophile) is an active-site residue. Intrachain disulfides connect C45–C51 and C47–C192. D85 provides a ligand contact to Mg(2+).

This sequence belongs to the arthropod phospholipase D family. Class II subfamily. It depends on Mg(2+) as a cofactor. In terms of tissue distribution, expressed by the venom gland.

The protein resides in the secreted. The catalysed reaction is an N-(acyl)-sphingosylphosphocholine = an N-(acyl)-sphingosyl-1,3-cyclic phosphate + choline. It catalyses the reaction an N-(acyl)-sphingosylphosphoethanolamine = an N-(acyl)-sphingosyl-1,3-cyclic phosphate + ethanolamine. The enzyme catalyses a 1-acyl-sn-glycero-3-phosphocholine = a 1-acyl-sn-glycero-2,3-cyclic phosphate + choline. It carries out the reaction a 1-acyl-sn-glycero-3-phosphoethanolamine = a 1-acyl-sn-glycero-2,3-cyclic phosphate + ethanolamine. Its function is as follows. Dermonecrotic toxins cleave the phosphodiester linkage between the phosphate and headgroup of certain phospholipids (sphingolipid and lysolipid substrates), forming an alcohol (often choline) and a cyclic phosphate. This toxin acts on sphingomyelin (SM). It may also act on ceramide phosphoethanolamine (CPE), lysophosphatidylcholine (LPC) and lysophosphatidylethanolamine (LPE), but not on lysophosphatidylserine (LPS), and lysophosphatidylglycerol (LPG). It acts by transphosphatidylation, releasing exclusively cyclic phosphate products as second products. Induces dermonecrosis, hemolysis, increased vascular permeability, edema, inflammatory response, and platelet aggregation. This is Dermonecrotic toxin LamSicTox-alphaIV1i from Loxosceles amazonica (Recluse spider).